A 216-amino-acid polypeptide reads, in one-letter code: Histidine biosynthesis bifunctional protein HisIE (216 aa).

A phosphoribosyl-AMP cyclohydrolase region spans residues 1-127 (MSFIDSLSPQ…GKIVAPPGDT (127 aa)). Positions 128-216 (LSQVFQVICD…VYRKLQERRR (89 aa)) are phosphoribosyl-ATP pyrophosphohydrolase.

This sequence in the N-terminal section; belongs to the PRA-CH family. It in the C-terminal section; belongs to the PRA-PH family.

The protein resides in the cytoplasm. The catalysed reaction is 1-(5-phospho-beta-D-ribosyl)-ATP + H2O = 1-(5-phospho-beta-D-ribosyl)-5'-AMP + diphosphate + H(+). It carries out the reaction 1-(5-phospho-beta-D-ribosyl)-5'-AMP + H2O = 1-(5-phospho-beta-D-ribosyl)-5-[(5-phospho-beta-D-ribosylamino)methylideneamino]imidazole-4-carboxamide. Its pathway is amino-acid biosynthesis; L-histidine biosynthesis; L-histidine from 5-phospho-alpha-D-ribose 1-diphosphate: step 2/9. The protein operates within amino-acid biosynthesis; L-histidine biosynthesis; L-histidine from 5-phospho-alpha-D-ribose 1-diphosphate: step 3/9. The sequence is that of Histidine biosynthesis bifunctional protein HisIE (hisI) from Nostoc sp. (strain PCC 7120 / SAG 25.82 / UTEX 2576).